Consider the following 294-residue polypeptide: rRNA 2'-O-methyltransferase fibrillarin (294 aa).

The tract at residues 1–62 is disordered; the sequence is MGKDFKSGGG…GKFGAKGPRG (62 aa). The span at 20–56 shows a compositional bias: gly residues; sequence GPGGPGGRPFNKGPGGPGGPGGKFGGGRPGGPGGKFG. Arg-27, Arg-47, and Arg-61 each carry asymmetric dimethylarginine. S-adenosyl-L-methionine is bound by residues 151–152, 170–171, 195–196, and 215–218; these read TT, EF, DA, and DVAQ.

It belongs to the methyltransferase superfamily. Fibrillarin family. In terms of assembly, component of box C/D small nucleolar ribonucleoprotein (snoRNP) particles. It is associated with the U3, U8 and U13 small nuclear RNAs. By homology to other fibrillarins, some or all of the N-terminal domain arginines are modified to asymmetric dimethylarginine (DMA).

The protein localises to the nucleus. Its subcellular location is the nucleolus. It catalyses the reaction L-glutaminyl-[histone H2A] + S-adenosyl-L-methionine = N(5)-methyl-L-glutaminyl-[histone H2A] + S-adenosyl-L-homocysteine + H(+). In terms of biological role, S-adenosyl-L-methionine-dependent methyltransferase that has the ability to methylate both RNAs and proteins. Involved in pre-rRNA processing. Utilizes the methyl donor S-adenosyl-L-methionine to catalyze the site-specific 2'-hydroxyl methylation of ribose moieties in pre-ribosomal RNA. Site specificity is provided by a guide RNA that base pairs with the substrate. Methylation occurs at a characteristic distance from the sequence involved in base pairing with the guide RNA. Also acts as a protein methyltransferase by mediating methylation of 'Gln-105' of histone H2A (H2AQ105me), a modification that impairs binding of the FACT complex and is specifically present at 35S ribosomal DNA locus. In Tetrahymena thermophila, this protein is rRNA 2'-O-methyltransferase fibrillarin (FIB).